Here is a 633-residue protein sequence, read N- to C-terminus: Probable extracellular metalloproteinase 3 (633 aa).

A signal peptide spans 1-18; that stretch reads MHGLLLAGLLALPMNVLA. Residues 19-246 constitute a propeptide that is removed on maturation; it reads HPAEQHASNV…VHNVVDYVAS (228 aa). N410 carries N-linked (GlcNAc...) asparagine glycosylation. H429 serves as a coordination point for Zn(2+). E430 is an active-site residue. H433 is a Zn(2+) binding site. N-linked (GlcNAc...) asparagine glycosylation is found at N480 and N622.

Belongs to the peptidase M36 family. Zn(2+) serves as cofactor.

It localises to the secreted. In terms of biological role, secreted metalloproteinase probably acting as a virulence factor. In Trichophyton verrucosum (strain HKI 0517), this protein is Probable extracellular metalloproteinase 3 (MEP3).